The primary structure comprises 711 residues: Progesterone receptor (711 aa).

The tract at residues 1 to 347 (MEDKSKQCLQ…YGFDALPRKI (347 aa)) is modulating, Pro-Rich. 2 consecutive NR C4-type zinc fingers follow at residues 348–368 (CLIC…CGSC) and 384–408 (CAGR…LKKC). A DNA-binding region (nuclear receptor) is located at residues 348–420 (CLICSDEASG…AGMVLGGRKF (73 aa)). Residues 457-691 (QEVQYFPELL…EFPEMMTEVI (235 aa)) form the NR LBD domain.

The protein belongs to the nuclear hormone receptor family. NR3 subfamily. In terms of tissue distribution, expressed in all tissues examined: highly expressed in testis and brain. Also expressed in heart, lung, liver, kidney, stomach and small intestine.

It is found in the nucleus. Its function is as follows. The steroid hormones and their receptors are involved in the regulation of eukaryotic gene expression and affect cellular proliferation and differentiation in target tissues. The sequence is that of Progesterone receptor (pgr) from Rana dybowskii (Dybovsky's frog).